Consider the following 637-residue polypeptide: Glutamate--cysteine ligase catalytic subunit (637 aa).

Met1 carries the post-translational modification N-acetylmethionine. 2 positions are modified to phosphoserine: Ser5 and Ser8.

The protein belongs to the glutamate--cysteine ligase type 3 family. Heterodimer of a catalytic heavy chain and a regulatory light chain.

It carries out the reaction L-cysteine + L-glutamate + ATP = gamma-L-glutamyl-L-cysteine + ADP + phosphate + H(+). The enzyme catalyses (2S)-2-aminobutanoate + L-glutamate + ATP = gamma-L-glutamyl-(2S)-2-aminobutanoate + ADP + phosphate + H(+). It participates in sulfur metabolism; glutathione biosynthesis; glutathione from L-cysteine and L-glutamate: step 1/2. With respect to regulation, feedback inhibition by glutathione. Catalyzes the ATP-dependent ligation of L-glutamate and L-cysteine and participates in the first and rate-limiting step in glutathione biosynthesis. In Mus musculus (Mouse), this protein is Glutamate--cysteine ligase catalytic subunit.